The primary structure comprises 115 residues: NAD(P)H-quinone oxidoreductase subunit M (115 aa).

The protein belongs to the complex I NdhM subunit family. As to quaternary structure, NDH-1 can be composed of about 15 different subunits; different subcomplexes with different compositions have been identified which probably have different functions.

Its subcellular location is the cellular thylakoid membrane. The catalysed reaction is a plastoquinone + NADH + (n+1) H(+)(in) = a plastoquinol + NAD(+) + n H(+)(out). It carries out the reaction a plastoquinone + NADPH + (n+1) H(+)(in) = a plastoquinol + NADP(+) + n H(+)(out). NDH-1 shuttles electrons from an unknown electron donor, via FMN and iron-sulfur (Fe-S) centers, to quinones in the respiratory and/or the photosynthetic chain. The immediate electron acceptor for the enzyme in this species is believed to be plastoquinone. Couples the redox reaction to proton translocation, and thus conserves the redox energy in a proton gradient. Cyanobacterial NDH-1 also plays a role in inorganic carbon-concentration. This chain is NAD(P)H-quinone oxidoreductase subunit M, found in Prochlorococcus marinus (strain MIT 9313).